A 405-amino-acid polypeptide reads, in one-letter code: Glucose-1-phosphate adenylyltransferase 1 (405 aa).

Residues tyrosine 96, glycine 161, 176–177 (EK), and serine 194 contribute to the alpha-D-glucose 1-phosphate site.

It belongs to the bacterial/plant glucose-1-phosphate adenylyltransferase family. In terms of assembly, homotetramer.

The enzyme catalyses alpha-D-glucose 1-phosphate + ATP + H(+) = ADP-alpha-D-glucose + diphosphate. The protein operates within glycan biosynthesis; glycogen biosynthesis. Functionally, involved in the biosynthesis of ADP-glucose, a building block required for the elongation reactions to produce glycogen. Catalyzes the reaction between ATP and alpha-D-glucose 1-phosphate (G1P) to produce pyrophosphate and ADP-Glc. The chain is Glucose-1-phosphate adenylyltransferase 1 from Vibrio parahaemolyticus serotype O3:K6 (strain RIMD 2210633).